Reading from the N-terminus, the 274-residue chain is Dermonecrotic toxin LspiSicTox-betaIII2 (274 aa).

His5 is a catalytic residue. Mg(2+) is bound by residues Glu25 and Asp27. His41 (nucleophile) is an active-site residue. Cystine bridges form between Cys45-Cys51 and Cys47-Cys189. Residue Asp85 participates in Mg(2+) binding.

Belongs to the arthropod phospholipase D family. Class II subfamily. Mg(2+) serves as cofactor. In terms of tissue distribution, expressed by the venom gland.

It is found in the secreted. The catalysed reaction is an N-(acyl)-sphingosylphosphocholine = an N-(acyl)-sphingosyl-1,3-cyclic phosphate + choline. It carries out the reaction an N-(acyl)-sphingosylphosphoethanolamine = an N-(acyl)-sphingosyl-1,3-cyclic phosphate + ethanolamine. The enzyme catalyses a 1-acyl-sn-glycero-3-phosphocholine = a 1-acyl-sn-glycero-2,3-cyclic phosphate + choline. It catalyses the reaction a 1-acyl-sn-glycero-3-phosphoethanolamine = a 1-acyl-sn-glycero-2,3-cyclic phosphate + ethanolamine. Functionally, dermonecrotic toxins cleave the phosphodiester linkage between the phosphate and headgroup of certain phospholipids (sphingolipid and lysolipid substrates), forming an alcohol (often choline) and a cyclic phosphate. This toxin acts on sphingomyelin (SM). It may also act on ceramide phosphoethanolamine (CPE), lysophosphatidylcholine (LPC) and lysophosphatidylethanolamine (LPE), but not on lysophosphatidylserine (LPS), and lysophosphatidylglycerol (LPG). It acts by transphosphatidylation, releasing exclusively cyclic phosphate products as second products. Induces dermonecrosis, hemolysis, increased vascular permeability, edema, inflammatory response, and platelet aggregation. This chain is Dermonecrotic toxin LspiSicTox-betaIII2, found in Loxosceles spinulosa (Recluse spider).